The following is an 85-amino-acid chain: Cell division topological specificity factor (85 aa).

Belongs to the MinE family.

Its function is as follows. Prevents the cell division inhibition by proteins MinC and MinD at internal division sites while permitting inhibition at polar sites. This ensures cell division at the proper site by restricting the formation of a division septum at the midpoint of the long axis of the cell. This is Cell division topological specificity factor from Shewanella sp. (strain ANA-3).